The chain runs to 141 residues: Hemoglobin subunit alpha (141 aa).

The 141-residue stretch at 1-141 (VLSPADKTNI…VSTVLTSKYR (141 aa)) folds into the Globin domain. Phosphoserine is present on Ser-3. Residue Lys-7 is modified to N6-succinyllysine. Thr-8 bears the Phosphothreonine mark. At Lys-11 the chain carries N6-succinyllysine. The residue at position 16 (Lys-16) is an N6-acetyllysine; alternate. N6-succinyllysine; alternate is present on Lys-16. Tyr-24 carries the post-translational modification Phosphotyrosine. A Phosphoserine modification is found at Ser-35. The residue at position 40 (Lys-40) is an N6-succinyllysine. Ser-49 is subject to Phosphoserine. His-58 provides a ligand contact to O2. His-87 serves as a coordination point for heme b. Ser-102 bears the Phosphoserine mark. A Phosphothreonine modification is found at Thr-108. Ser-124 carries the post-translational modification Phosphoserine. A phosphothreonine mark is found at Thr-134 and Thr-137. Ser-138 carries the post-translational modification Phosphoserine.

The protein belongs to the globin family. Heterotetramer of two alpha chains and two beta chains. In terms of tissue distribution, red blood cells.

Involved in oxygen transport from the lung to the various peripheral tissues. Its function is as follows. Hemopressin acts as an antagonist peptide of the cannabinoid receptor CNR1. Hemopressin-binding efficiently blocks cannabinoid receptor CNR1 and subsequent signaling. The chain is Hemoglobin subunit alpha (HBA) from Chrysocyon brachyurus (Maned wolf).